Consider the following 602-residue polypeptide: Elongation factor 4 (602 aa).

The tr-type G domain occupies 7–189; it reads RNIRNFSIIA…AIVQRIPAPQ (183 aa). GTP-binding positions include 19-24 and 136-139; these read DHGKST and NKID.

Belongs to the TRAFAC class translation factor GTPase superfamily. Classic translation factor GTPase family. LepA subfamily.

The protein localises to the cell inner membrane. It catalyses the reaction GTP + H2O = GDP + phosphate + H(+). In terms of biological role, required for accurate and efficient protein synthesis under certain stress conditions. May act as a fidelity factor of the translation reaction, by catalyzing a one-codon backward translocation of tRNAs on improperly translocated ribosomes. Back-translocation proceeds from a post-translocation (POST) complex to a pre-translocation (PRE) complex, thus giving elongation factor G a second chance to translocate the tRNAs correctly. Binds to ribosomes in a GTP-dependent manner. The chain is Elongation factor 4 from Xylella fastidiosa (strain 9a5c).